The primary structure comprises 341 residues: Ribosomal RNA small subunit methyltransferase H (341 aa).

Residues 47–49, D64, F91, D109, and Q116 contribute to the S-adenosyl-L-methionine site; that span reads GGY.

It belongs to the methyltransferase superfamily. RsmH family.

The protein localises to the cytoplasm. The catalysed reaction is cytidine(1402) in 16S rRNA + S-adenosyl-L-methionine = N(4)-methylcytidine(1402) in 16S rRNA + S-adenosyl-L-homocysteine + H(+). Functionally, specifically methylates the N4 position of cytidine in position 1402 (C1402) of 16S rRNA. The sequence is that of Ribosomal RNA small subunit methyltransferase H from Rhizobium leguminosarum bv. trifolii (strain WSM2304).